Consider the following 316-residue polypeptide: Protein C4 (316 aa).

It belongs to the poxviridae OPG031 protein family.

Its subcellular location is the host cytoplasm. The protein resides in the host nucleus. Its function is as follows. Plays a role in the inhibition of host NF-kappa-B activation. Mechanistically, blocks the subunit p65/RELA translocation into the host nucleus. In Homo sapiens (Human), this protein is Protein C4 (OPG031).